Reading from the N-terminus, the 342-residue chain is Protein pelota homolog (342 aa).

Belongs to the eukaryotic release factor 1 family. Pelota subfamily. In terms of assembly, monomer. Requires a divalent metal cation as cofactor.

Its subcellular location is the cytoplasm. May function in recognizing stalled ribosomes, interact with stem-loop structures in stalled mRNA molecules, and effect endonucleolytic cleavage of the mRNA. May play a role in the release non-functional ribosomes and degradation of damaged mRNAs. Has endoribonuclease activity. The sequence is that of Protein pelota homolog from Sulfolobus acidocaldarius (strain ATCC 33909 / DSM 639 / JCM 8929 / NBRC 15157 / NCIMB 11770).